A 207-amino-acid polypeptide reads, in one-letter code: Cytochrome c biogenesis ATP-binding export protein CcmA (207 aa).

Residues 4-207 form the ABC transporter domain; the sequence is LEVRELLCER…RISLTQTRAV (204 aa). Residue 36-43 coordinates ATP; that stretch reads GSNGAGKT.

Belongs to the ABC transporter superfamily. CcmA exporter (TC 3.A.1.107) family. In terms of assembly, the complex is composed of two ATP-binding proteins (CcmA) and two transmembrane proteins (CcmB).

The protein resides in the cell inner membrane. It carries out the reaction heme b(in) + ATP + H2O = heme b(out) + ADP + phosphate + H(+). Functionally, part of the ABC transporter complex CcmAB involved in the biogenesis of c-type cytochromes; once thought to export heme, this seems not to be the case, but its exact role is uncertain. Responsible for energy coupling to the transport system. In Shigella dysenteriae serotype 1 (strain Sd197), this protein is Cytochrome c biogenesis ATP-binding export protein CcmA.